The primary structure comprises 143 residues: Large ribosomal subunit protein bL17 (143 aa).

Positions 124–133 (GAGDRARLEA) are enriched in basic and acidic residues. The interval 124-143 (GAGDRARLEAEGTDAEAAAA) is disordered.

It belongs to the bacterial ribosomal protein bL17 family. Part of the 50S ribosomal subunit. Contacts protein L32.

The chain is Large ribosomal subunit protein bL17 from Mesorhizobium japonicum (strain LMG 29417 / CECT 9101 / MAFF 303099) (Mesorhizobium loti (strain MAFF 303099)).